We begin with the raw amino-acid sequence, 247 residues long: uncharacterized protein (247 aa).

This is an uncharacterized protein from Acanthamoeba polyphaga (Amoeba).